The chain runs to 175 residues: Avenin-like a3 (175 aa).

Positions 1 to 19 are cleaved as a signal peptide; it reads MKTMFLLALLAFTATSAVA.

The protein belongs to the prolamin family. In terms of processing, contains 7 disulfide bonds.

Functionally, seed storage protein. Not integrated in the gluten polymer through disulfide bonds, unless incorporated by reduction and reoxidation during dough making. Increases dough strength and bread volume, but decreases dough stability when added into a base wheat flour. The polypeptide is Avenin-like a3 (Triticum aestivum (Wheat)).